Reading from the N-terminus, the 66-residue chain is MDVRNCSFCGKSIEPASGFLYVRKDGSVLNFCSRKCKENMVKLKRVPRKVKWTNEYHRIKAMTKKA.

The Zn(2+) site is built by Cys6, Cys9, Cys32, and Cys36. The C4-type zinc finger occupies 6–36; sequence CSFCGKSIEPASGFLYVRKDGSVLNFCSRKC.

Belongs to the eukaryotic ribosomal protein eL24 family. As to quaternary structure, part of the 50S ribosomal subunit. Forms a cluster with proteins L3 and L14. Requires Zn(2+) as cofactor.

In terms of biological role, binds to the 23S rRNA. This is Large ribosomal subunit protein eL24 from Picrophilus torridus (strain ATCC 700027 / DSM 9790 / JCM 10055 / NBRC 100828 / KAW 2/3).